The following is a 506-amino-acid chain: Carboxyl-terminal PDZ ligand of neuronal nitric oxide synthase protein (506 aa).

The region spanning 26-196 (FQHGICFEAK…ESERNSNSSG (171 aa)) is the PID domain. Disordered regions lie at residues 175-224 (HTQQ…VEVP) and 241-260 (DAVG…HPQE). Phosphoserine occurs at positions 188, 192, and 195. Over residues 203–213 (TGAERASTATA) the composition is skewed to low complexity. Ser-266 is modified (phosphoserine). A coiled-coil region spans residues 322 to 363 (AAEAAARLEAQARVHQLLLQNKDMLQHISLLVKQVQELELKL). Phosphoserine is present on residues Ser-371, Ser-374, Ser-401, and Ser-417. The segment at 494-506 (QELGDGLDDEIAV) is interaction with NOS1. Positions 504–506 (IAV) match the PDZ-binding motif.

Interacts with the PDZ domain of NOS1 or the second PDZ domain of DLG4 through its C-terminus. Interacts with RASD1 and SYN1, SYN2 and SYN3 via its PID domain. Forms a ternary complex with NOS1 and RASD1. Forms a ternary complex with NOS1 and SYN1. As to expression, expressed in kidney glomeruli podocytes.

It localises to the cell projection. The protein localises to the filopodium. Its subcellular location is the podosome. Its function is as follows. Adapter protein involved in neuronal nitric-oxide (NO) synthesis regulation via its association with nNOS/NOS1. The complex formed with NOS1 and synapsins is necessary for specific NO and synapsin functions at a presynaptic level. Mediates an indirect interaction between NOS1 and RASD1 leading to enhance the ability of NOS1 to activate RASD1. Competes with DLG4 for interaction with NOS1, possibly affecting NOS1 activity by regulating the interaction between NOS1 and DLG4. In kidney podocytes, plays a role in podosomes and filopodia formation through CDC42 activation. The protein is Carboxyl-terminal PDZ ligand of neuronal nitric oxide synthase protein of Homo sapiens (Human).